The primary structure comprises 200 residues: Dephospho-CoA kinase (200 aa).

Residues Val-4–Asp-200 enclose the DPCK domain. An ATP-binding site is contributed by Ala-12–Thr-17.

Belongs to the CoaE family.

The protein resides in the cytoplasm. The enzyme catalyses 3'-dephospho-CoA + ATP = ADP + CoA + H(+). Its pathway is cofactor biosynthesis; coenzyme A biosynthesis; CoA from (R)-pantothenate: step 5/5. Functionally, catalyzes the phosphorylation of the 3'-hydroxyl group of dephosphocoenzyme A to form coenzyme A. In Bacillus cereus (strain ATCC 10987 / NRS 248), this protein is Dephospho-CoA kinase.